A 319-amino-acid chain; its full sequence is 4-hydroxy-3-methylbut-2-enyl diphosphate reductase (319 aa).

Cysteine 17 lines the [4Fe-4S] cluster pocket. Residues histidine 46 and histidine 79 each contribute to the (2E)-4-hydroxy-3-methylbut-2-enyl diphosphate site. Residues histidine 46 and histidine 79 each coordinate dimethylallyl diphosphate. The isopentenyl diphosphate site is built by histidine 46 and histidine 79. Cysteine 101 contributes to the [4Fe-4S] cluster binding site. Histidine 129 lines the (2E)-4-hydroxy-3-methylbut-2-enyl diphosphate pocket. Dimethylallyl diphosphate is bound at residue histidine 129. Histidine 129 contributes to the isopentenyl diphosphate binding site. Glutamate 131 functions as the Proton donor in the catalytic mechanism. Threonine 170 contributes to the (2E)-4-hydroxy-3-methylbut-2-enyl diphosphate binding site. Cysteine 200 contacts [4Fe-4S] cluster. Residues serine 228, serine 229, asparagine 230, and serine 273 each coordinate (2E)-4-hydroxy-3-methylbut-2-enyl diphosphate. Dimethylallyl diphosphate contacts are provided by serine 228, serine 229, asparagine 230, and serine 273. Isopentenyl diphosphate is bound by residues serine 228, serine 229, asparagine 230, and serine 273.

Belongs to the IspH family. It depends on [4Fe-4S] cluster as a cofactor.

The enzyme catalyses isopentenyl diphosphate + 2 oxidized [2Fe-2S]-[ferredoxin] + H2O = (2E)-4-hydroxy-3-methylbut-2-enyl diphosphate + 2 reduced [2Fe-2S]-[ferredoxin] + 2 H(+). It carries out the reaction dimethylallyl diphosphate + 2 oxidized [2Fe-2S]-[ferredoxin] + H2O = (2E)-4-hydroxy-3-methylbut-2-enyl diphosphate + 2 reduced [2Fe-2S]-[ferredoxin] + 2 H(+). It participates in isoprenoid biosynthesis; dimethylallyl diphosphate biosynthesis; dimethylallyl diphosphate from (2E)-4-hydroxy-3-methylbutenyl diphosphate: step 1/1. Its pathway is isoprenoid biosynthesis; isopentenyl diphosphate biosynthesis via DXP pathway; isopentenyl diphosphate from 1-deoxy-D-xylulose 5-phosphate: step 6/6. Catalyzes the conversion of 1-hydroxy-2-methyl-2-(E)-butenyl 4-diphosphate (HMBPP) into a mixture of isopentenyl diphosphate (IPP) and dimethylallyl diphosphate (DMAPP). Acts in the terminal step of the DOXP/MEP pathway for isoprenoid precursor biosynthesis. The polypeptide is 4-hydroxy-3-methylbut-2-enyl diphosphate reductase (Cereibacter sphaeroides (strain ATCC 17023 / DSM 158 / JCM 6121 / CCUG 31486 / LMG 2827 / NBRC 12203 / NCIMB 8253 / ATH 2.4.1.) (Rhodobacter sphaeroides)).